Here is a 185-residue protein sequence, read N- to C-terminus: Lipopolysaccharide export system protein LptA (185 aa).

The first 27 residues, 1–27, serve as a signal peptide directing secretion; that stretch reads MKFKTNKLSLNLVLASSLLAASIPAFA. A disordered region spans residues 166–185; that stretch reads PSQLQDKNNKGQTPAQKKGN.

Belongs to the LptA family. In terms of assembly, component of the lipopolysaccharide transport and assembly complex.

The protein localises to the periplasm. Functionally, involved in the assembly of lipopolysaccharide (LPS). Required for the translocation of LPS from the inner membrane to the outer membrane. May form a bridge between the inner membrane and the outer membrane, via interactions with LptC and LptD, thereby facilitating LPS transfer across the periplasm. The chain is Lipopolysaccharide export system protein LptA from Escherichia coli O157:H7.